Reading from the N-terminus, the 128-residue chain is Azurin (128 aa).

The 128-residue stretch at 1–128 (AECSVDIQGN…ALMKGTLTLK (128 aa)) folds into the Plastocyanin-like domain. The cysteines at positions 3 and 26 are disulfide-linked. Residues His46, Cys112, His117, and Met121 each coordinate Cu cation.

The protein localises to the periplasm. Functionally, transfers electrons from cytochrome c551 to cytochrome oxidase. The chain is Azurin from Pseudomonas aeruginosa.